Consider the following 331-residue polypeptide: Low affinity immunoglobulin epsilon Fc receptor (331 aa).

Over 1-23 the chain is Cytoplasmic; the sequence is MEENEYSGYWEPPRKRCCCARRG. Residues Cys-17 and Cys-18 are each lipidated (S-palmitoyl cysteine). Residues 24–49 traverse the membrane as a helical; Signal-anchor for type II membrane protein segment; the sequence is TQLMLVGLLSTAMWAGLLALLLLWHW. Topologically, residues 50–331 are extracellular; sequence ETEKNLKQLG…PTRPTPKSEP (282 aa). The N-linked (GlcNAc...) asparagine glycan is linked to Asn-65. 3 repeats span residues 71-91, 92-112, and 113-133; these read KDLQ…VQMS, QNLQ…SRLS, and QNLT…SKLS. Asn-114 carries N-linked (GlcNAc...) asparagine glycosylation. 4 disulfide bridges follow: Cys-183/Cys-311, Cys-186/Cys-197, Cys-214/Cys-305, and Cys-282/Cys-296. A C-type lectin domain is found at 185 to 298; that stretch reads ICPKNWLHFQ…GQWNDAFCRS (114 aa). 3 residues coordinate Ca(2+): Glu-272, Asn-292, and Asp-293. O-linked (Xyl...) (chondroitin sulfate) serine glycosylation occurs at Ser-319.

In terms of assembly, homotrimer. Interacts (via C-type lectin domain) with IGHE (via CH3 region); this interaction regulates IgE homeostasis. Interacts (via C-terminus) with CR2/CD21 (via Sushi domain 1 and 2). Post-translationally, N- and O-glycosylated.

It is found in the cell membrane. Its subcellular location is the secreted. Its function is as follows. Low-affinity receptor for immunoglobulin E (IgE) and CR2/CD21. Has essential roles in the regulation of IgE production and in the differentiation of B cells. On B cells, initiates IgE-dependent antigen uptake and presentation to T cells. On macrophages, upon IgE binding and antigen cross-linking induces intracellular killing of parasites through activation of L-Arginine-nitric oxide pathway. The protein is Low affinity immunoglobulin epsilon Fc receptor (Fcer2) of Mus musculus (Mouse).